The chain runs to 211 residues: Troponin I, cardiac muscle (211 aa).

The tract at residues 1 to 25 is disordered; that stretch reads MADESSDAAGEPQPAPAPVRRRSSA. Ala2 carries the N-acetylalanine modification. 2 positions are modified to phosphoserine: Ser5 and Ser6. Phosphoserine; by PKA and PKD/PRKD1 occurs at positions 23 and 24. Residue Tyr27 is modified to Phosphotyrosine. Position 32 is a phosphothreonine; by STK4/MST1 (Thr32). Positions 33–80 are involved in binding TNC; sequence EPHAKKKSKISASRKLQLKTLMLQIAKQEMEREAEERRGEKGRVLSTR. Phosphoserine; by PKC/PRKCE occurs at positions 43 and 45. Thr52 bears the Phosphothreonine; by STK4/MST1 mark. Ser78 is modified (phosphoserine). Thr79 carries the phosphothreonine modification. Thr130 and Thr144 each carry phosphothreonine; by STK4/MST1. An involved in binding TNC and actin region spans residues 130-151; that stretch reads TQKIYDLRGKFKRPTLRRVRIS. At Ser151 the chain carries Phosphoserine; by PAK3. Phosphoserine occurs at positions 167 and 200.

It belongs to the troponin I family. Interacts with TRIM63. Binds to actin and tropomyosin. Interacts with STK4/MST1. Phosphorylated at Ser-23 and Ser-24 by PRKD1; phosphorylation reduces myofilament calcium sensitivity. Phosphorylated preferentially at Thr-32. Phosphorylation by STK4/MST1 alters its binding affinity to TNNC1 (cardiac Tn-C) and TNNT2 (cardiac Tn-T). Phosphorylated at Ser-43 and Ser-45 by PRKCE; phosphorylation increases myocardium contractile dysfunction.

Functionally, troponin I is the inhibitory subunit of troponin, the thin filament regulatory complex which confers calcium-sensitivity to striated muscle actomyosin ATPase activity. This chain is Troponin I, cardiac muscle (Tnni3), found in Rattus norvegicus (Rat).